Consider the following 633-residue polypeptide: Threonine--tRNA ligase (633 aa).

The TGS domain occupies 1-61 (MINVYFSDNS…TEDCKFEVIT (61 aa)). The interval 242–533 (DHRKIGKELE…LIEHHSGKLP (292 aa)) is catalytic. Positions 333, 384, and 510 each coordinate Zn(2+).

Belongs to the class-II aminoacyl-tRNA synthetase family. In terms of assembly, homodimer. Requires Zn(2+) as cofactor.

The protein resides in the cytoplasm. It catalyses the reaction tRNA(Thr) + L-threonine + ATP = L-threonyl-tRNA(Thr) + AMP + diphosphate + H(+). Catalyzes the attachment of threonine to tRNA(Thr) in a two-step reaction: L-threonine is first activated by ATP to form Thr-AMP and then transferred to the acceptor end of tRNA(Thr). Also edits incorrectly charged L-seryl-tRNA(Thr). This chain is Threonine--tRNA ligase, found in Ehrlichia ruminantium (strain Welgevonden).